The following is a 530-amino-acid chain: MPSSLEKLSTNRVKLTIEMPFDELKPSLDKAYKDIANQVNVPGFRKGKVPAPVIDQRFGRGVVLQEAINDALPAAYGKAIEENTVVPLGQPEIEVTKLEDGEVVEFTAEVDVRPDFDLPDVSAISVEVPAVEVPDEDVDERVETLRQRFATNTEVERAAAKDDLVTIDLAGTRDGEVLEDATASGVTYKVGSEGMLEGLDEAVTGLKAGESAEFHSTLVGGPLRGQDADIKVTVTKVCEQELPAVDDDFAQLVSQFDTVDEMRADLRTALENMARLDQAADARDKVLEEVISKIDIELPTNLIDSELEARRQQVNQQLAQAGMTVEEYLEDSEEEVDNADDFWAEIEKRSLDALKAQIVLDKMADDDEIGVEQNELTELLFRKAQQNGTSPEEEAQHMMQHNHLPDWMQEIRRGKALASMVGAATVTDSKGNALELDRIQPDGTIADKQAEEDAPAEDSAEKADGKATEESKAEEKAPAKKATTKKISAKKSAGAKATTKKVVDAKSDDKPAAKKPAPKKKTAAKDDKSK.

A PPIase FKBP-type domain is found at Asp-162–Pro-243. The disordered stretch occupies residues Asn-432 to Lys-530. 2 stretches are compositionally biased toward basic and acidic residues: residues Ser-459–Pro-478 and Lys-501–Ala-512.

Belongs to the FKBP-type PPIase family. Tig subfamily.

It is found in the cytoplasm. It catalyses the reaction [protein]-peptidylproline (omega=180) = [protein]-peptidylproline (omega=0). Functionally, involved in protein export. Acts as a chaperone by maintaining the newly synthesized protein in an open conformation. Functions as a peptidyl-prolyl cis-trans isomerase. This chain is Trigger factor, found in Cutibacterium acnes (strain DSM 16379 / KPA171202) (Propionibacterium acnes).